We begin with the raw amino-acid sequence, 166 residues long: AP-3 complex subunit sigma (166 aa).

Belongs to the adaptor complexes small subunit family. As to quaternary structure, adaptor protein complex 3 (AP-3) is a heterotetramer composed of two large adaptins (delta-type subunit and beta-type subunit), a medium adaptin (mu-type subunit) and a small adaptin (sigma-type subunit).

Its subcellular location is the cytoplasm. It localises to the golgi apparatus. The protein localises to the cytoplasmic vesicle membrane. Functionally, part of the AP-3 complex, an adaptor-related complex which seems to be clathrin-associated. The complex is associated with the Golgi region as well as more peripheral structures. It facilitates the budding of vesicles from the Golgi membrane and may be directly involved in trafficking to the vacuole. It also function in maintaining the identity of lytic vacuoles and in regulating the transition between storage and lytic vacuoles. The chain is AP-3 complex subunit sigma from Arabidopsis thaliana (Mouse-ear cress).